We begin with the raw amino-acid sequence, 332 residues long: Very-long-chain 3-oxoacyl-CoA reductase (332 aa).

Residues 15–35 traverse the membrane as a helical segment; it reads GQWALAGIGALYVATRVGAFL. Positions 60, 115, 123, 142, 177, 209, 213, 242, and 244 each coordinate NADP(+). Tyr-209 (proton donor) is an active-site residue. Lys-213 acts as the Lowers pKa of active site Tyr in catalysis.

This sequence belongs to the short-chain dehydrogenases/reductases (SDR) family.

It is found in the endoplasmic reticulum membrane. It catalyses the reaction a very-long-chain (3R)-3-hydroxyacyl-CoA + NADP(+) = a very-long-chain 3-oxoacyl-CoA + NADPH + H(+). It participates in lipid metabolism; fatty acid biosynthesis. In terms of biological role, component of the microsomal membrane bound fatty acid elongation system, which produces the 26-carbon very long-chain fatty acids (VLCFA) from palmitate. Catalyzes the reduction of the 3-ketoacyl-CoA intermediate that is formed in each cycle of fatty acid elongation. VLCFAs serve as precursors for ceramide and sphingolipids. This is Very-long-chain 3-oxoacyl-CoA reductase from Neurospora crassa (strain ATCC 24698 / 74-OR23-1A / CBS 708.71 / DSM 1257 / FGSC 987).